The chain runs to 206 residues: Ion-translocating oxidoreductase complex subunit G (206 aa).

Residues 9-29 (GITLALFAAGSTGLTAAINQM) form a helical membrane-spanning segment. At threonine 174 the chain carries FMN phosphoryl threonine.

It belongs to the RnfG family. In terms of assembly, the complex is composed of six subunits: RsxA, RsxB, RsxC, RsxD, RsxE and RsxG. The cofactor is FMN.

It is found in the cell inner membrane. Part of a membrane-bound complex that couples electron transfer with translocation of ions across the membrane. Required to maintain the reduced state of SoxR. Probably transfers electron from NAD(P)H to SoxR. This Escherichia coli (strain K12) protein is Ion-translocating oxidoreductase complex subunit G.